The chain runs to 1650 residues: Transmembrane domain-containing protein DDB_G0287209 (1650 aa).

Residues asparagine 194–isoleucine 225 are a coiled coil. Disordered regions lie at residues asparagine 197–asparagine 216 and glutamate 1218–asparagine 1296. Positions asparagine 1224 to glycine 1284 are enriched in low complexity. 9 helical membrane-spanning segments follow: residues proline 1314 to phenylalanine 1334, isoleucine 1347 to phenylalanine 1369, isoleucine 1390 to serine 1410, tryptophan 1454 to proline 1474, isoleucine 1489 to phenylalanine 1509, tryptophan 1515 to leucine 1535, proline 1539 to phenylalanine 1559, valine 1570 to isoleucine 1590, and phenylalanine 1595 to isoleucine 1615.

The protein localises to the membrane. This is Transmembrane domain-containing protein DDB_G0287209 from Dictyostelium discoideum (Social amoeba).